The sequence spans 872 residues: Alanine--tRNA ligase (872 aa).

Positions 558, 562, 660, and 664 each coordinate Zn(2+).

It belongs to the class-II aminoacyl-tRNA synthetase family. Requires Zn(2+) as cofactor.

The protein resides in the cytoplasm. The enzyme catalyses tRNA(Ala) + L-alanine + ATP = L-alanyl-tRNA(Ala) + AMP + diphosphate. Catalyzes the attachment of alanine to tRNA(Ala) in a two-step reaction: alanine is first activated by ATP to form Ala-AMP and then transferred to the acceptor end of tRNA(Ala). Also edits incorrectly charged Ser-tRNA(Ala) and Gly-tRNA(Ala) via its editing domain. The polypeptide is Alanine--tRNA ligase (Chlamydia pneumoniae (Chlamydophila pneumoniae)).